The chain runs to 190 residues: Potassium-transporting ATPase KdpC subunit (190 aa).

The helical transmembrane segment at 10–30 (LLVFLTILTGGVYPLATTVLG) threads the bilayer.

Belongs to the KdpC family. As to quaternary structure, the system is composed of three essential subunits: KdpA, KdpB and KdpC.

The protein localises to the cell inner membrane. Functionally, part of the high-affinity ATP-driven potassium transport (or Kdp) system, which catalyzes the hydrolysis of ATP coupled with the electrogenic transport of potassium into the cytoplasm. This subunit acts as a catalytic chaperone that increases the ATP-binding affinity of the ATP-hydrolyzing subunit KdpB by the formation of a transient KdpB/KdpC/ATP ternary complex. In Cronobacter sakazakii (strain ATCC BAA-894) (Enterobacter sakazakii), this protein is Potassium-transporting ATPase KdpC subunit.